Consider the following 104-residue polypeptide: Gastrin (104 aa).

The N-terminal stretch at 1–21 (MQRLCVCVLILALALTAFSEA) is a signal peptide. The segment at 22–49 (SWKPRSQLQDAPSGPGANGGLEPHWLNR) is disordered. Positions 22-58 (SWKPRSQLQDAPSGPGANGGLEPHWLNRLGPASHHRW) are excised as a propeptide. Gln59 and Gln76 each carry pyrrolidone carboxylic acid. Residue Tyr87 is modified to Sulfotyrosine. A Phenylalanine amide modification is found at Phe92. Ser96 is modified (phosphoserine). The propeptide occupies 96–104 (SAEDGDQHP).

It belongs to the gastrin/cholecystokinin family.

It is found in the secreted. Functionally, gastrin stimulates the stomach mucosa to produce and secrete hydrochloric acid and the pancreas to secrete its digestive enzymes. It also stimulates smooth muscle contraction and increases blood circulation and water secretion in the stomach and intestine. The polypeptide is Gastrin (GAST) (Felis catus (Cat)).